Reading from the N-terminus, the 187-residue chain is GTP cyclohydrolase 1 (187 aa).

Cys76, His79, and Cys148 together coordinate Zn(2+).

Belongs to the GTP cyclohydrolase I family. As to quaternary structure, toroid-shaped homodecamer, composed of two pentamers of five dimers.

It carries out the reaction GTP + H2O = 7,8-dihydroneopterin 3'-triphosphate + formate + H(+). It functions in the pathway cofactor biosynthesis; 7,8-dihydroneopterin triphosphate biosynthesis; 7,8-dihydroneopterin triphosphate from GTP: step 1/1. This chain is GTP cyclohydrolase 1, found in Streptococcus agalactiae serotype III (strain NEM316).